The following is a 504-amino-acid chain: Mitochondrial-processing peptidase subunit alpha (504 aa).

This sequence belongs to the peptidase M16 family. Heterodimer of alpha and beta subunits, forming the mitochondrial processing protease (MPP) in which subunit alpha is involved in substrate recognition and binding and subunit beta is the catalytic subunit.

The protein resides in the mitochondrion inner membrane. It catalyses the reaction a quinol + 2 Fe(III)-[cytochrome c](out) = a quinone + 2 Fe(II)-[cytochrome c](out) + 2 H(+)(out). Its function is as follows. Substrate recognition and binding subunit of the essential mitochondrial processing protease (MPP), which cleaves the mitochondrial sequence off newly imported precursors proteins. Functionally, this is a component of the ubiquinol-cytochrome c reductase complex (complex III or cytochrome b-c1 complex), which is part of the mitochondrial respiratory chain. Mediates formation of the complex between cytochromes c and c1. The chain is Mitochondrial-processing peptidase subunit alpha (MPP) from Solanum tuberosum (Potato).